Here is a 484-residue protein sequence, read N- to C-terminus: Sperm motility kinase 2B (484 aa).

Residues 8–256 (YVMLETIGHG…VAEVMVHPWV (249 aa)) enclose the Protein kinase domain. Residues 14 to 22 (IGHGGCSKV) and K37 contribute to the ATP site. The active-site Proton acceptor is the D127. In terms of domain architecture, UBA spans 272–314 (PLKPNPAIVKAMGYIGFQAQDIEDSLRQRKFNETMASYCLLKK). Composition is skewed to polar residues over residues 356–373 (PTSLRLSANRQMSVCGRS) and 422–434 (SSDDSTEGHTSAS). Disordered regions lie at residues 356 to 400 (PTSL…TMDH) and 422 to 450 (SSDDSTEGHTSASAEDKPVRSRGWPRGIK).

Belongs to the protein kinase superfamily. CAMK Ser/Thr protein kinase family. Smok subfamily. As to expression, testis-specific. Expressed in the testis from 22 days postpartum (22 dpp).

The catalysed reaction is L-seryl-[protein] + ATP = O-phospho-L-seryl-[protein] + ADP + H(+). The enzyme catalyses L-threonyl-[protein] + ATP = O-phospho-L-threonyl-[protein] + ADP + H(+). May play a role in sperm motility, especially in the regulation of flagellar function. The protein is Sperm motility kinase 2B of Mus musculus (Mouse).